The following is a 1393-amino-acid chain: DNA-directed RNA polymerase subunit beta' (1393 aa).

Residues Cys72, Cys74, Cys87, and Cys90 each coordinate Zn(2+). Asp463, Asp465, and Asp467 together coordinate Mg(2+). The Zn(2+) site is built by Cys812, Cys887, Cys894, and Cys897.

It belongs to the RNA polymerase beta' chain family. The RNAP catalytic core consists of 2 alpha, 1 beta, 1 beta' and 1 omega subunit. When a sigma factor is associated with the core the holoenzyme is formed, which can initiate transcription. It depends on Mg(2+) as a cofactor. The cofactor is Zn(2+).

The catalysed reaction is RNA(n) + a ribonucleoside 5'-triphosphate = RNA(n+1) + diphosphate. In terms of biological role, DNA-dependent RNA polymerase catalyzes the transcription of DNA into RNA using the four ribonucleoside triphosphates as substrates. The sequence is that of DNA-directed RNA polymerase subunit beta' from Chlamydia pneumoniae (Chlamydophila pneumoniae).